The following is a 171-amino-acid chain: uncharacterized protein (171 aa).

A signal peptide spans 1 to 24 (MIFDSLTMTQSSLSLLLLTGAIFS). Residues 25–70 (ISALYLTLFHRCATFSATSDLFLLVPLKFVSRDINDRLKTHYHHSC) are Extracellular-facing. The chain crosses the membrane as a helical span at residues 71–91 (LGSPFLCIIFLFISPLLNYHF). The Cytoplasmic portion of the chain corresponds to 92-140 (RSLVRPPKIHQKGSIPTLTKNAETRCSHHLKQAAATGEVCKVVVIIKGH). A helical transmembrane segment spans residues 141 to 161 (ILKDCSIFFFIIFPLIYPLFI). Residues 162–171 (NCSSKYNGLQ) lie on the Extracellular side of the membrane.

It is found in the membrane. This is an uncharacterized protein from Saccharomyces cerevisiae (strain ATCC 204508 / S288c) (Baker's yeast).